A 345-amino-acid chain; its full sequence is Phosphate acyltransferase (345 aa).

This sequence belongs to the PlsX family. In terms of assembly, homodimer. Probably interacts with PlsY.

It localises to the cytoplasm. It catalyses the reaction a fatty acyl-[ACP] + phosphate = an acyl phosphate + holo-[ACP]. The protein operates within lipid metabolism; phospholipid metabolism. Its function is as follows. Catalyzes the reversible formation of acyl-phosphate (acyl-PO(4)) from acyl-[acyl-carrier-protein] (acyl-ACP). This enzyme utilizes acyl-ACP as fatty acyl donor, but not acyl-CoA. This is Phosphate acyltransferase from Levilactobacillus brevis (strain ATCC 367 / BCRC 12310 / CIP 105137 / JCM 1170 / LMG 11437 / NCIMB 947 / NCTC 947) (Lactobacillus brevis).